A 440-amino-acid polypeptide reads, in one-letter code: Ribulose bisphosphate carboxylase large chain (440 aa).

The residue at position 4 (Lys4) is an N6,N6,N6-trimethyllysine. Residues Asn113 and Thr163 each coordinate substrate. The active-site Proton acceptor is Lys165. Lys167 lines the substrate pocket. Mg(2+)-binding residues include Lys191, Asp193, and Glu194. Lys191 carries the N6-carboxylysine modification. His284 (proton acceptor) is an active-site residue. Substrate contacts are provided by Arg285, His317, and Ser369.

This sequence belongs to the RuBisCO large chain family. Type I subfamily. As to quaternary structure, heterohexadecamer of 8 large chains and 8 small chains; disulfide-linked. The disulfide link is formed within the large subunit homodimers. Mg(2+) serves as cofactor. The disulfide bond which can form in the large chain dimeric partners within the hexadecamer appears to be associated with oxidative stress and protein turnover.

The protein resides in the plastid. The protein localises to the chloroplast. The catalysed reaction is 2 (2R)-3-phosphoglycerate + 2 H(+) = D-ribulose 1,5-bisphosphate + CO2 + H2O. It carries out the reaction D-ribulose 1,5-bisphosphate + O2 = 2-phosphoglycolate + (2R)-3-phosphoglycerate + 2 H(+). In terms of biological role, ruBisCO catalyzes two reactions: the carboxylation of D-ribulose 1,5-bisphosphate, the primary event in carbon dioxide fixation, as well as the oxidative fragmentation of the pentose substrate in the photorespiration process. Both reactions occur simultaneously and in competition at the same active site. The protein is Ribulose bisphosphate carboxylase large chain of Dicksonia antarctica (Australian tree fern).